Here is a 256-residue protein sequence, read N- to C-terminus: 5-oxoprolinase subunit A (256 aa).

The protein belongs to the LamB/PxpA family. As to quaternary structure, forms a complex composed of PxpA, PxpB and PxpC.

It catalyses the reaction 5-oxo-L-proline + ATP + 2 H2O = L-glutamate + ADP + phosphate + H(+). In terms of biological role, catalyzes the cleavage of 5-oxoproline to form L-glutamate coupled to the hydrolysis of ATP to ADP and inorganic phosphate. The protein is 5-oxoprolinase subunit A of Cutibacterium acnes (strain DSM 16379 / KPA171202) (Propionibacterium acnes).